The primary structure comprises 4998 residues: SCO-spondin (4998 aa).

The N-terminal stretch at 1–17 (MLPLALLFGMLWTQANG) is a signal peptide. Residues 18–102 (HWCEQIETVH…ACCPGWGGAH (85 aa)) form the EMI domain. Positions 72-241 (GLCAIYKPPE…KLPGSEPGCL (170 aa)) constitute a VWFD 1 domain. Disulfide bonds link Cys-74-Cys-202 and Cys-103-Cys-240. Asn-88 and Asn-130 each carry an N-linked (GlcNAc...) asparagine glycan. Residues 349 to 404 (CPGGQLYSDCVSSCPPSCSAVAQGEEGSCGKECVSGCECPTGLFWDGALCVPAAHC) enclose the TIL 1 domain. A VWFC 1 domain is found at 404-496 (CPCYHRRQRY…HGACDTGSCL (93 aa)). One can recognise a VWFD 2 domain in the interval 442–615 (AECAVGGDGH…FQVSGDGRCP (174 aa)). Disulfide bonds link Cys-444/Cys-577 and Cys-468/Cys-614. 2 N-linked (GlcNAc...) asparagine glycosylation sites follow: Asn-534 and Asn-698. The TIL 2 domain occupies 706-759 (CPGGQVYQECAPVCGHHCGEPEDCKELGICVAGCNCPPGLLWDLEGQCVPPSMC). N-linked (GlcNAc...) asparagine glycosylation is found at Asn-771, Asn-790, Asn-824, and Asn-866. Residues 892 to 1062 (GWCQASGAPH…HSWRLNPLCP (171 aa)) form the VWFD 3 domain. 3 disulfides stabilise this stretch: Cys-894-Cys-1026, Cys-916-Cys-1061, and Cys-937-Cys-944. One can recognise a TIL 3 domain in the interval 1153–1209 (CEGGQVYEPCGSTCPPTCHDHHSELRWHCQVITCVEGCFCPEGTLLHGGACMKLAAC). Asn-1230 is a glycosylation site (N-linked (GlcNAc...) asparagine). LDL-receptor class A domains lie at 1253 to 1290 (GCAEGETLCRENGHCVPLEWLCDNQDDCGDGSDEEGCA), 1293 to 1328 (VCGEGQMSCQSGHCLPLSLICDGQDDCGDGTDEQGC), 1329 to 1365 (LCPHGSLACADGRCLPPALLCNGHPDCLDAADEESCL), and 1369 to 1407 (SCISGEVSCVDGTCVRTIQLCDGVWDCPDGADEGPSHCS). 12 disulfide bridges follow: Cys-1254–Cys-1267, Cys-1261–Cys-1280, Cys-1274–Cys-1289, Cys-1294–Cys-1306, Cys-1301–Cys-1319, Cys-1313–Cys-1328, Cys-1330–Cys-1342, Cys-1337–Cys-1355, Cys-1349–Cys-1364, Cys-1370–Cys-1382, Cys-1377–Cys-1395, and Cys-1389–Cys-1406. A disordered region spans residues 1406–1440 (CSLPSLPTPPGGIGQNPSTSSLDTAPSPVGSTSPA). Positions 1420 to 1440 (QNPSTSSLDTAPSPVGSTSPA) are enriched in polar residues. LDL-receptor class A domains are found at residues 1442 to 1478 (PCSLLEFQCNSGECTPRGWRCDQEEDCTDGSDELDCG) and 1480 to 1519 (PCMLYQVPCAHSPHCVSPGQLCDGVTQCPDGSDEDPDVCE). Cystine bridges form between Cys-1443/Cys-1455, Cys-1450/Cys-1468, Cys-1462/Cys-1477, Cys-1481/Cys-1494, Cys-1488/Cys-1507, and Cys-1501/Cys-1518. Asn-1528 carries an N-linked (GlcNAc...) asparagine glycan. The region spanning 1533–1571 (PCPEFSCPDGTCIDFLLVCDGNPDCELADETEPSLDEQG) is the LDL-receptor class A 7 domain. 9 cysteine pairs are disulfide-bonded: Cys-1534-Cys-1544, Cys-1539-Cys-1557, Cys-1551-Cys-1572, Cys-1584-Cys-1620, Cys-1588-Cys-1625, Cys-1599-Cys-1610, Cys-1640-Cys-1680, Cys-1644-Cys-1685, and Cys-1654-Cys-1664. 2 consecutive TSP type-1 domains span residues 1572–1626 (CGAW…EACP) and 1628–1686 (DGEW…EGCL). Asn-1598 carries an N-linked (GlcNAc...) asparagine glycan. Asn-1687 is a glycosylation site (N-linked (GlcNAc...) asparagine). Residues 1692-1746 (GELVFRTCAPCPLTCDDISGQAACPPDRPCSSPGCWCPDGKVLNTEGQCVRPRQC) enclose the TIL 4 domain. EGF-like domains lie at 1702–1741 (CPLTCDDISGQAACPPDRPCSSPGCWCPDGKVLNTEGQCV) and 1742–1768 (RPRQCPCLVDGAHYWPGQRIKMDCQLC). Residues 1771 to 1827 (DCGWSSWSPWAECLGPCSSQSLQWSFRSPNNPRLSGHGRQCRGIHRKARRCQTEACE) form the TSP type-1 3 domain. Disulfide bonds link Cys-1772–Cys-1811, Cys-1783–Cys-1787, and Cys-1821–Cys-1826. Positions 1827-1887 (EGCEQWGLMY…GMGESCCHCA (61 aa)) constitute a VWFC 2 domain. N-linked (GlcNAc...) asparagine glycans are attached at residues Asn-1892 and Asn-1989. Residues 1929–2085 (CYSPLGLAGL…IFLWVELLGL (157 aa)) form the F5/8 type C domain. One can recognise an LDL-receptor class A 8 domain in the interval 2091-2127 (LCPGSRHRCASGECAPKGGPCDGAVDCDDGSDEEGCG). Disulfide bonds link Cys-2092–Cys-2104, Cys-2099–Cys-2117, and Cys-2111–Cys-2126. A disordered region spans residues 2119-2209 (DGSDEEGCGS…TFPPGAKSLH (91 aa)). Residues 2130-2144 (HASTTSRTPALSPTQ) show a composition bias toward polar residues. A compositionally biased stretch (basic and acidic residues) spans 2148–2158 (FPREVSEDLRQ). 2 stretches are compositionally biased toward polar residues: residues 2164-2173 (TSHSPPSSGE) and 2190-2201 (QPMQTLSATSTF). 2 LDL-receptor class A domains span residues 2242–2278 (PCGPGQVPCDVLGCVEQEQLCDGREDCLDGSDEQHCA) and 2299–2335 (LCSPSQLRCGSGECLPFEHRCDLQVNCQDGSDEDNCV). 12 cysteine pairs are disulfide-bonded: Cys-2243/Cys-2255, Cys-2250/Cys-2268, Cys-2262/Cys-2277, Cys-2300/Cys-2312, Cys-2307/Cys-2325, Cys-2319/Cys-2334, Cys-2337/Cys-2373, Cys-2348/Cys-2352, Cys-2383/Cys-2388, Cys-2403/Cys-2440, Cys-2407/Cys-2445, and Cys-2418/Cys-2430. TSP type-1 domains follow at residues 2336–2389 (DCVL…QACP) and 2391–2446 (AGAW…QLCP). The region spanning 2468–2511 (VPPCPPSCLDPEANRSCSGHCMEGCRCPPGLLLQDSHCLPLSEC) is the TIL 5 domain. Asn-2481 and Asn-2530 each carry an N-linked (GlcNAc...) asparagine glycan. TSP type-1 domains follow at residues 2551–2605 (SCGW…TDCG), 2609–2664 (PGWT…PVCP), and 2666–2719 (PSAW…HPCT). 9 cysteine pairs are disulfide-bonded: Cys-2552–Cys-2590, Cys-2563–Cys-2567, Cys-2600–Cys-2604, Cys-2620–Cys-2658, Cys-2624–Cys-2663, Cys-2640–Cys-2648, Cys-2678–Cys-2713, Cys-2682–Cys-2718, and Cys-2693–Cys-2703. Residues Asn-2772 and Asn-2802 are each glycosylated (N-linked (GlcNAc...) asparagine). TSP type-1 domains are found at residues 2820–2875 (ACGW…RPCR) and 2876–2919 (GPGA…QPCA). Intrachain disulfides connect Cys-2821/Cys-2859, Cys-2832/Cys-2836, and Cys-2869/Cys-2874. Residues Asn-2897, Asn-2952, Asn-2999, and Asn-3009 are each glycosylated (N-linked (GlcNAc...) asparagine). The 53-residue stretch at 2926-2978 (CPEDQQWLDCAQGPASCAHLSIPGEANQTCHPGCYCLSGMLLLNNVCVPVQDC) folds into the TIL 6 domain. TSP type-1 domains follow at residues 3019–3086 (QPAW…PGCN) and 3088–3143 (AGGW…QPCP). 6 disulfides stabilise this stretch: Cys-3031/Cys-3080, Cys-3035/Cys-3085, Cys-3046/Cys-3070, Cys-3100/Cys-3137, Cys-3104/Cys-3142, and Cys-3115/Cys-3127. Residue Asn-3146 is glycosylated (N-linked (GlcNAc...) asparagine). Residues 3151-3201 (EGAEYSPCGPPCPRSCDDLVHCVWRCQPGCYCPLGKVLSADGAICVKPSYC) enclose the TIL 7 domain. An N-linked (GlcNAc...) asparagine glycan is attached at Asn-3235. TSP type-1 domains lie at 3244–3306 (SGDW…TACP) and 3308–3363 (DGAW…TLCT). Cystine bridges form between Cys-3256–Cys-3299, Cys-3260–Cys-3305, Cys-3271–Cys-3283, Cys-3320–Cys-3355, Cys-3323–Cys-3362, and Cys-3333–Cys-3345. N-linked (GlcNAc...) asparagine glycosylation is present at Asn-3301. A glycan (N-linked (GlcNAc...) asparagine) is linked at Asn-3357. The TIL 8 domain maps to 3365–3421 (CGGGQDLLPCGQPCPHSCQDLSLGSTCQPGSAGCQSGCGCPPGQLSQDGLCVFPVDC). Residues Asn-3435 and Asn-3462 are each glycosylated (N-linked (GlcNAc...) asparagine). The 49-residue stretch at 3481 to 3529 (PGIWSSWGPWEKCSVSCGGGEQLRSRQCARPPCPGLAQQSRICHIHVCR) folds into the TSP type-1 15 domain. Cystine bridges form between Cys-3493–Cys-3523, Cys-3497–Cys-3528, and Cys-3508–Cys-3513. Asn-3638 carries N-linked (GlcNAc...) asparagine glycosylation. 4 consecutive TSP type-1 domains span residues 3657 to 3713 (HGSF…PECP), 3727 to 3779 (AGGW…PSCA), 3793 to 3849 (NCFW…RACP), and 3851 to 3906 (PGGW…MPCE). Disulfide bonds link Cys-3669–Cys-3707, Cys-3673–Cys-3712, and Cys-3685–Cys-3697. A glycan (N-linked (GlcNAc...) asparagine) is linked at Asn-3761. 6 disulfide bridges follow: Cys-3794-Cys-3830, Cys-3805-Cys-3809, Cys-3843-Cys-3848, Cys-3863-Cys-3900, Cys-3867-Cys-3905, and Cys-3878-Cys-3890. One can recognise a TIL 9 domain in the interval 3909-3964 (CPAGMEMVSCANHCPYSCSDLQEGGMCQEDQACQLGCRCSEGFLEQDGGCVPVGHC). Residue Asn-3986 is glycosylated (N-linked (GlcNAc...) asparagine). TSP type-1 domains follow at residues 4006-4059 (HCAW…VPCP), 4100-4155 (PRGW…QLCL), 4157-4213 (KLER…GPCQ), and 4215-4269 (DCTW…GNCS). Disulfide bonds link Cys-4007–Cys-4043, Cys-4018–Cys-4022, Cys-4053–Cys-4058, Cys-4112–Cys-4149, Cys-4116–Cys-4154, Cys-4127–Cys-4139, Cys-4169–Cys-4207, Cys-4173–Cys-4212, Cys-4184–Cys-4195, Cys-4216–Cys-4253, Cys-4227–Cys-4229, and Cys-4263–Cys-4268. N-linked (GlcNAc...) asparagine glycosylation occurs at Asn-4196. The N-linked (GlcNAc...) asparagine glycan is linked to Asn-4267. The 56-residue stretch at 4273 to 4328 (CPPPFEFQSCGSPCAGLCATHLNHRLCQDLPPCQPGCYCPKGLLEQAGSCILPEQC) folds into the TIL 10 domain. 2 N-linked (GlcNAc...) asparagine glycosylation sites follow: Asn-4408 and Asn-4463. Positions 4465 to 4516 (TCQWGPWGPWSPCQMPCSGGFKLRWRVARDTSAGECPGPWAQTESCNMGSCP) constitute a TSP type-1 24 domain. 3 cysteine pairs are disulfide-bonded: Cys-4466–Cys-4500, Cys-4477–Cys-4481, and Cys-4510–Cys-4515. A TIL 11 domain is found at 4530-4576 (DCANQCPRSCADLWDGVQCLQGPCSPGCRCPPGQLVQDGHCVPISSC). N-linked (GlcNAc...) asparagine glycosylation is found at Asn-4584, Asn-4601, and Asn-4606. The region spanning 4616-4669 (CPVLGPWSAWSECSAVCGKGTMVRHRSCEEHPDREPCQALDLQQWQECNLQACP) is the TSP type-1 25 domain. Intrachain disulfides connect Cys-4628/Cys-4663, Cys-4632/Cys-4668, and Cys-4643/Cys-4652. Positions 4671–4725 (CPPGQVLSTCATMCPSLCSHLWPGTICVREPCQLGCGCPGGQLLYNGTCIPPEAC) constitute a TIL 12 domain. Residues Asn-4716, Asn-4756, Asn-4799, and Asn-4806 are each glycosylated (N-linked (GlcNAc...) asparagine). A TIL 13 domain is found at 4777–4835 (CAPGEIWQHGKLGPCEKTCPEMNMTQAWSNCTEAQAPGCVCQLGYFRSQTGLCVPEDHC). In terms of domain architecture, VWFC 3 spans 4835-4893 (CECWHHGSPHLPGSEWQEACESCRCLHGKSVCIRHCPELSCAQGEVIMQEPGSCCPICQ). 4 disulfides stabilise this stretch: Cys-4892–Cys-4952, Cys-4918–Cys-4969, Cys-4928–Cys-4985, and Cys-4932–Cys-4987. A CTCK domain is found at 4892–4991 (CQQDTLKEEP…IHSCQCSACQ (100 aa)). N-linked (GlcNAc...) asparagine glycosylation is present at Asn-4912.

This sequence belongs to the thrombospondin family. In terms of tissue distribution, subcommissural organ.

It is found in the secreted. Its subcellular location is the extracellular space. Its function is as follows. Involved in the modulation of neuronal aggregation. May be involved in developmental events during the formation of the central nervous system. The protein is SCO-spondin of Mus musculus (Mouse).